Reading from the N-terminus, the 681-residue chain is Replication protein E1 (681 aa).

The short motif at 88 to 90 is the Nuclear localization signal element; that stretch reads KRK. A phosphoserine; by host mark is found at Ser94, Ser98, and Ser111. The short motif at 110-119 is the Nuclear export signal element; that stretch reads LSPRLDAIKL. The segment at 124–221 is disordered; the sequence is AKAKRRLFEL…SDLQSTSTGK (98 aa). Composition is skewed to polar residues over residues 138-158 and 170-184; these read YGQT…SSET and VVQS…NGRQ. The span at 185 to 207 shows a compositional bias: basic and acidic residues; it reads NNDEGSGRNVGEHGSQEEERAGG. The tract at residues 218-384 is DNA-binding region; sequence STGKGAGGVV…QTMVGHAMED (167 aa). One can recognise an SF3 helicase domain in the interval 483–633; it reads VEFIPFLCAF…FPVTTQGEPM (151 aa). 509 to 516 is a binding site for ATP; sequence GPADTGKS. Residue Lys590 forms a Glycyl lysine isopeptide (Lys-Gly) (interchain with G-Cter in SUMO) linkage. The disordered stretch occupies residues 657-681; that stretch reads PEDEEEHGNPSEPFRCVPGQNARTI.

The protein belongs to the papillomaviridae E1 protein family. In terms of assembly, can form hexamers. Interacts with E2 protein; this interaction increases E1 DNA binding specificity. Interacts with host DNA polymerase subunit POLA2. Interacts with host single stranded DNA-binding protein RPA1. Interacts with host TOP1; this interaction stimulates the enzymatic activity of TOP1. In terms of processing, phosphorylated. Sumoylated.

It is found in the host nucleus. It carries out the reaction Couples ATP hydrolysis with the unwinding of duplex DNA by translocating in the 3'-5' direction.. The catalysed reaction is ATP + H2O = ADP + phosphate + H(+). ATP-dependent DNA 3'-5' helicase required for initiation of viral DNA replication. It forms a complex with the viral E2 protein. The E1-E2 complex binds to the replication origin which contains binding sites for both proteins. During the initial step, a dimer of E1 interacts with a dimer of protein E2 leading to a complex that binds the viral origin of replication with high specificity. Then, a second dimer of E1 displaces the E2 dimer in an ATP-dependent manner to form the E1 tetramer. Following this, two E1 monomers are added to each half of the site, which results in the formation of two E1 trimers on the viral ori. Subsequently, two hexamers will be created. The double hexamer acts as a bi-directional helicase machinery and unwinds the viral DNA and then recruits the host DNA polymerase to start replication. The protein is Replication protein E1 of Homo sapiens (Human).